Here is a 1004-residue protein sequence, read N- to C-terminus: Hyaluronate lyase HylB (1004 aa).

The first 29 residues, 1–29, serve as a signal peptide directing secretion; it reads MKNRKIWVMLVGLFTALTNGFMGTTLTFA. Residues H468, Y477, and R531 contribute to the active site.

This sequence belongs to the polysaccharide lyase 8 family.

The protein resides in the secreted. It catalyses the reaction [hyaluronan](n) = n 3-(4-deoxy-beta-D-gluc-4-enuronosyl)-N-acetyl-D-glucosamine + H2O. It carries out the reaction Eliminative degradation of polysaccharides containing 1,4-beta-D-hexosaminyl and 1,3-beta-D-glucuronosyl linkages to disaccharides containing 4-deoxy-beta-D-gluc-4-enuronosyl groups.. Degrades hyaluronic acid (HA) and chondroitin sulfate (CS) A in vitro. Is not active against heparin sodium salt (HS). Involved in the pathogenesis of vancomycin-resistant E.faecalis infections. Contributes to attenuation of the lipopolysaccharide (LPS)-mediated nuclear factor (NF)-kappa-B activation assayed in the mouse RAW-Blue reporter macrophages. The sequence is that of Hyaluronate lyase HylB from Enterococcus faecalis (strain ATCC 700802 / V583).